Here is a 274-residue protein sequence, read N- to C-terminus: Large ribosomal subunit protein uL2 (274 aa).

Residues 214-274 (LGRRPRTRPV…NKYIVERRKK (61 aa)) form a disordered region.

Belongs to the universal ribosomal protein uL2 family. Part of the 50S ribosomal subunit. Forms a bridge to the 30S subunit in the 70S ribosome.

Its function is as follows. One of the primary rRNA binding proteins. Required for association of the 30S and 50S subunits to form the 70S ribosome, for tRNA binding and peptide bond formation. It has been suggested to have peptidyltransferase activity; this is somewhat controversial. Makes several contacts with the 16S rRNA in the 70S ribosome. This chain is Large ribosomal subunit protein uL2, found in Flavobacterium johnsoniae (strain ATCC 17061 / DSM 2064 / JCM 8514 / BCRC 14874 / CCUG 350202 / NBRC 14942 / NCIMB 11054 / UW101) (Cytophaga johnsonae).